The sequence spans 360 residues: Glycerol-1-phosphate dehydrogenase [NAD(P)+] (360 aa).

Residues 108–112 and 130–133 contribute to the NAD(+) site; these read GRVID and TAAS. Asp-135 is a binding site for substrate. An NAD(+)-binding site is contributed by Ser-139. Asp-182 is a binding site for substrate. The Zn(2+) site is built by Asp-182 and His-262. Residue His-266 coordinates substrate. His-278 serves as a coordination point for Zn(2+).

The protein belongs to the glycerol-1-phosphate dehydrogenase family. Zn(2+) serves as cofactor.

The protein localises to the cytoplasm. It carries out the reaction sn-glycerol 1-phosphate + NAD(+) = dihydroxyacetone phosphate + NADH + H(+). It catalyses the reaction sn-glycerol 1-phosphate + NADP(+) = dihydroxyacetone phosphate + NADPH + H(+). Its pathway is membrane lipid metabolism; glycerophospholipid metabolism. In terms of biological role, catalyzes the NAD(P)H-dependent reduction of dihydroxyacetonephosphate (DHAP or glycerone phosphate) to glycerol 1-phosphate (G1P). The G1P thus generated is used as the glycerophosphate backbone of phospholipids in the cellular membranes of Archaea. The sequence is that of Glycerol-1-phosphate dehydrogenase [NAD(P)+] from Methanocorpusculum labreanum (strain ATCC 43576 / DSM 4855 / Z).